The following is a 637-amino-acid chain: 1-deoxy-D-xylulose-5-phosphate synthase (637 aa).

Thiamine diphosphate-binding positions include His76 and 117 to 119 (AHS). Position 148 (Asp148) interacts with Mg(2+). Residues 149–150 (GA), Asn177, Tyr287, and Glu369 each bind thiamine diphosphate. Residue Asn177 coordinates Mg(2+).

The protein belongs to the transketolase family. DXPS subfamily. As to quaternary structure, homodimer. The cofactor is Mg(2+). Thiamine diphosphate is required as a cofactor.

The enzyme catalyses D-glyceraldehyde 3-phosphate + pyruvate + H(+) = 1-deoxy-D-xylulose 5-phosphate + CO2. The protein operates within metabolic intermediate biosynthesis; 1-deoxy-D-xylulose 5-phosphate biosynthesis; 1-deoxy-D-xylulose 5-phosphate from D-glyceraldehyde 3-phosphate and pyruvate: step 1/1. Functionally, catalyzes the acyloin condensation reaction between C atoms 2 and 3 of pyruvate and glyceraldehyde 3-phosphate to yield 1-deoxy-D-xylulose-5-phosphate (DXP). The sequence is that of 1-deoxy-D-xylulose-5-phosphate synthase from Pelagibacter ubique (strain HTCC1062).